The chain runs to 314 residues: MMLLGASLYLNNTQEVSDEIDTANLYANWKMKYNRRYTNQRDEMYRYKVFTDNLNYIRAFYESPEEATFTLELNQFADMSQQEFAQTYLSLKVPRTAKLNAANSNFQYKGAEVDWTDNKKVKYPAVKNQGSCGSCWAFSAVGALEINTDIELNRKYELSEQDLVDCSGPYDNDGCNGGWMDSAFEYVADNGLAEAKDYPYTAKDGTCKTSVKRPYTHVQGFKDIDSCDELAQTIQERTVAVAVDANPWQFYRSGVLSKCTKNLNHGVVLVGVQADGAWKIRNSWGSSWGEAGHIRLAGGDTCGICAAPSFPILG.

An N-terminal signal peptide occupies residues 1–24 (MMLLGASLYLNNTQEVSDEIDTAN). Positions 25–109 (LYANWKMKYN…NAANSNFQYK (85 aa)) are cleaved as a propeptide — activation peptide. 3 disulfides stabilise this stretch: Cys132-Cys175, Cys166-Cys207, and Cys259-Cys302. Cys135 is an active-site residue. Active-site residues include His265 and Asn282.

It belongs to the peptidase C1 family.

The protein resides in the secreted. It catalyses the reaction Specificity close to that of papain. As compared to cathepsin B, cathepsin L exhibits higher activity toward protein substrates, but has little activity on Z-Arg-Arg-NHMec, and no peptidyl-dipeptidase activity.. In terms of biological role, may be involved in extracellular digestion. The chain is Cathepsin L 1 from Paramecium tetraurelia.